The sequence spans 267 residues: Protein I267L (267 aa).

The protein belongs to the asfivirus I267L family. Interacts with host RNF135.

In terms of biological role, plays a role in the inhibition of host RNA Pol-III-RIGI-mediated innate antiviral response. Mechanistically, interacts with host E3 ubiquitin ligase RNF135, disrupting RNF135-RIGI interaction and impairing RNF135-mediated 'Lys-63'-polyubiquitination and activation of RIGI. This is Protein I267L from African swine fever virus (strain Badajoz 1971 Vero-adapted) (Ba71V).